Reading from the N-terminus, the 360-residue chain is MKPSIVAKLEALQERHEEVQALLGEPSVIADMDRFRALSREYAQLTDITRCFQQWQQAQEDQQTAEMMLDDPEMRDMAQEELKEGKATIEALEQQLQVLLLPKDPDDERGCFLEVRAGTGGDEAAIFAGDLFRMYSRYAESRRWRVEVMSASDGEHGGYKEVIAKISGDGVYGQLKFESGGHRVQRVPATESQGRIHTSACTVAVMAEVPEAELPDINPADLRIDTFRSSGAGGQHVNTTDSAIRITHLPTGIVVECQDERSQHKNKAKALSVLGARIRAAEVQKRQQEEASTRRNLLGSGDRSDRIRTYNFPQGRVTDHRINLTLYRLDEVMEGKLDTLIQPVVQEYQADQLAALSEQE.

An N5-methylglutamine modification is found at Gln235. Residues 284 to 293 are compositionally biased toward basic and acidic residues; sequence QKRQQEEAST. The segment at 284-305 is disordered; sequence QKRQQEEASTRRNLLGSGDRSD.

It belongs to the prokaryotic/mitochondrial release factor family. Post-translationally, methylated by PrmC. Methylation increases the termination efficiency of RF1.

It is found in the cytoplasm. Its function is as follows. Peptide chain release factor 1 directs the termination of translation in response to the peptide chain termination codons UAG and UAA. The protein is Peptide chain release factor 1 of Pectobacterium carotovorum subsp. carotovorum (strain PC1).